The chain runs to 181 residues: Oligoribonuclease (181 aa).

Residues 8 to 171 enclose the Exonuclease domain; the sequence is LIWIDLEMTG…LDIQESIAEL (164 aa). Tyrosine 129 is a catalytic residue.

It belongs to the oligoribonuclease family.

It is found in the cytoplasm. Functionally, 3'-to-5' exoribonuclease specific for small oligoribonucleotides. This is Oligoribonuclease from Shewanella amazonensis (strain ATCC BAA-1098 / SB2B).